The chain runs to 174 residues: D(1B) dopamine receptor (174 aa).

Residues 1–10 (SILNLCIISV) form a helical membrane-spanning segment. Over 11–32 (DRYWAISRPFCYERKMTQRVAL) the chain is Cytoplasmic. A helical transmembrane segment spans residues 33-54 (VMVGLAWTLSILISFIPVQLHW). Residues 55–96 (HRDKVGSRDGLDPPSNLANGTPWEEAGESDRSAENCDSSLNR) lie on the Extracellular side of the membrane. The segment at 64–88 (GLDPPSNLANGTPWEEAGESDRSAE) is disordered. The N-linked (GlcNAc...) asparagine glycan is linked to asparagine 95. A helical transmembrane segment spans residues 97-119 (TYAISSSLISFYIPVAIMIVTYT). Topologically, residues 120-169 (RIYRIAQVQIRRISSLERAAEHAQSCRSREACAPDSGLRASIKKETKVLK) are cytoplasmic. A helical transmembrane segment spans residues 170–174 (TLSVI).

Belongs to the G-protein coupled receptor 1 family.

Its subcellular location is the cell membrane. Dopamine receptor whose activity is mediated by G proteins which activate adenylyl cyclase. The sequence is that of D(1B) dopamine receptor (DRD5) from Bos taurus (Bovine).